Consider the following 281-residue polypeptide: Putative phosphoenolpyruvate synthase regulatory protein (281 aa).

161 to 168 (GVSRSGKT) serves as a coordination point for ADP.

Belongs to the pyruvate, phosphate/water dikinase regulatory protein family. PSRP subfamily.

The enzyme catalyses [pyruvate, water dikinase] + ADP = [pyruvate, water dikinase]-phosphate + AMP + H(+). It carries out the reaction [pyruvate, water dikinase]-phosphate + phosphate + H(+) = [pyruvate, water dikinase] + diphosphate. Its function is as follows. Bifunctional serine/threonine kinase and phosphorylase involved in the regulation of the phosphoenolpyruvate synthase (PEPS) by catalyzing its phosphorylation/dephosphorylation. In Herminiimonas arsenicoxydans, this protein is Putative phosphoenolpyruvate synthase regulatory protein.